A 714-amino-acid polypeptide reads, in one-letter code: Fatty acid oxidation complex subunit alpha (714 aa).

Residues 1–190 (MDMTSAFTLN…KSGLVDEIVP (190 aa)) are enoyl-CoA hydratase. The interval 306–714 (GTLDSIGILG…FWKTSATDRH (409 aa)) is 3-hydroxyacyl-CoA dehydrogenase.

This sequence in the N-terminal section; belongs to the enoyl-CoA hydratase/isomerase family. It in the central section; belongs to the 3-hydroxyacyl-CoA dehydrogenase family. In terms of assembly, heterotetramer of two alpha chains (FadJ) and two beta chains (FadI).

It localises to the cytoplasm. The enzyme catalyses a (3S)-3-hydroxyacyl-CoA = a (2E)-enoyl-CoA + H2O. It carries out the reaction a 4-saturated-(3S)-3-hydroxyacyl-CoA = a (3E)-enoyl-CoA + H2O. The catalysed reaction is a (3S)-3-hydroxyacyl-CoA + NAD(+) = a 3-oxoacyl-CoA + NADH + H(+). It catalyses the reaction (3S)-3-hydroxybutanoyl-CoA = (3R)-3-hydroxybutanoyl-CoA. It functions in the pathway lipid metabolism; fatty acid beta-oxidation. In terms of biological role, catalyzes the formation of a hydroxyacyl-CoA by addition of water on enoyl-CoA. Also exhibits 3-hydroxyacyl-CoA epimerase and 3-hydroxyacyl-CoA dehydrogenase activities. The protein is Fatty acid oxidation complex subunit alpha of Escherichia fergusonii (strain ATCC 35469 / DSM 13698 / CCUG 18766 / IAM 14443 / JCM 21226 / LMG 7866 / NBRC 102419 / NCTC 12128 / CDC 0568-73).